The primary structure comprises 131 residues: Replicase polyprotein 1ab (131 aa).

A Nidovirus-type SAM-dependent 2'-O-MTase domain is found at 1-128; the sequence is ITEFSWNKYL…KLLNFGNHFI (128 aa).

Its function is as follows. The replicase polyprotein of coronaviruses is a multifunctional protein: it contains the activities necessary for the transcription of negative stranded RNA, leader RNA, subgenomic mRNAs and progeny virion RNA as well as proteinases responsible for the cleavage of the polyprotein into functional products. In Sus scrofa (Pig), this protein is Replicase polyprotein 1ab (rep).